Here is a 542-residue protein sequence, read N- to C-terminus: Thermosome subunit alpha (542 aa).

This sequence belongs to the TCP-1 chaperonin family. As to quaternary structure, forms a Heterooligomeric complex of two stacked eight-membered rings.

Its function is as follows. Molecular chaperone; binds unfolded polypeptides in vitro, and has a weak ATPase activity. The chain is Thermosome subunit alpha (thsA) from Methanothermobacter thermautotrophicus (strain ATCC 29096 / DSM 1053 / JCM 10044 / NBRC 100330 / Delta H) (Methanobacterium thermoautotrophicum).